Here is a 273-residue protein sequence, read N- to C-terminus: Aquaporin NIP1-4 (273 aa).

The next 2 membrane-spanning stretches (helical) occupy residues 59-79 and 86-106; these read LLAEFLATFFLMFAGLGAITV and VTFPGVAVAWGAAVMAMVYAV. Positions 115-117 match the NPA 1 motif; it reads NPA. 3 consecutive transmembrane segments (helical) span residues 133-155, 174-194, and 198-218; these read APAYALAQTAAATAASVVLRLMF, SLVIEFVITFYLMFVIMAVAT, and AVGHMAGVAVGGTIMLNVLFA. The NPA 2 signature appears at 227-229; the sequence is NPA. The helical transmembrane segment at 245–265 threads the bilayer; the sequence is WVYILGPFAGAAAGAWAYSLI.

It belongs to the MIP/aquaporin (TC 1.A.8) family. NIP (TC 1.A.8.12) subfamily. In terms of tissue distribution, expressed in leaves.

The protein resides in the membrane. Functionally, aquaporins facilitate the transport of water and small neutral solutes across cell membranes. In Oryza sativa subsp. japonica (Rice), this protein is Aquaporin NIP1-4 (NIP1-4).